We begin with the raw amino-acid sequence, 172 residues long: Lipoprotein signal peptidase (172 aa).

3 helical membrane passes run 10–30, 68–88, and 98–118; these read LIWL…KAWV, WQLW…AFWL, and SALP…DRLM. Residues Asp-124 and Asp-142 contribute to the active site. Residues 138 to 158 traverse the membrane as a helical segment; sequence FNIADSAIVGGAIGIAVFGLF.

The protein belongs to the peptidase A8 family.

The protein localises to the cell inner membrane. It carries out the reaction Release of signal peptides from bacterial membrane prolipoproteins. Hydrolyzes -Xaa-Yaa-Zaa-|-(S,diacylglyceryl)Cys-, in which Xaa is hydrophobic (preferably Leu), and Yaa (Ala or Ser) and Zaa (Gly or Ala) have small, neutral side chains.. It functions in the pathway protein modification; lipoprotein biosynthesis (signal peptide cleavage). This protein specifically catalyzes the removal of signal peptides from prolipoproteins. In Xanthomonas axonopodis pv. citri (strain 306), this protein is Lipoprotein signal peptidase.